Here is a 115-residue protein sequence, read N- to C-terminus: Large ribosomal subunit protein bL20 (115 aa).

Belongs to the bacterial ribosomal protein bL20 family.

In terms of biological role, binds directly to 23S ribosomal RNA and is necessary for the in vitro assembly process of the 50S ribosomal subunit. It is not involved in the protein synthesizing functions of that subunit. This Chlorobium phaeobacteroides (strain DSM 266 / SMG 266 / 2430) protein is Large ribosomal subunit protein bL20.